Consider the following 350-residue polypeptide: Quinone oxidoreductase-like protein 2 (350 aa).

N6-acetyllysine is present on lysine 36. The residue at position 201 (lysine 201) is an N6-succinyllysine. Lysine 302 and lysine 328 each carry N6-acetyllysine.

This sequence belongs to the zinc-containing alcohol dehydrogenase family. Quinone oxidoreductase subfamily.

The polypeptide is Quinone oxidoreductase-like protein 2 (Rattus norvegicus (Rat)).